The chain runs to 392 residues: MKKYHISMINIPAYGHVNPTLALVEKLCEKGHRVTYATTEEFAPAVQQAGGEALIYHTSLNIDPKQIREMMEKNDAPLSLLKESLSILPQLEELYKDDQPDLIIYDFVALAGKLFAEKLNVPVIKLCSSYAQNESFQLGNEDMLKKIREAEAEFKAYLEQEKLPAVSFEQLAVPEALNIVFMPKSFQIQHETFDDRFCFVGPSLGERKEKESLLIDKDDRPLMLISLGTAFNAWPEFYKMCIKAFRDSSWQVIMSVGKTIDPESLEDIPANFTIRQSVPQLEVLEKADLFISHGGMNSTMEAMNAGVPLVVIPQMYEQELTANRVDELGLGVYLPKEEVTVSSLQEAVQAVSSDQELLSRVKNMQKDVKEAGGAERAAAEIEAFMKKSAVPQ.

UDP-binding positions include asparagine 18, threonine 229, serine 255, valine 278, histidine 293, and 297–301; that span reads NSTME.

The protein belongs to the UDP-glycosyltransferase family. Monomer.

The enzyme catalyses an NDP-glycose + an acceptor = a glycosylated acceptor + NDP.. Activity is improved in the presence of Mn(2+), Mg(2+) and Ca(2+), and inhibited by Ni(2+), Zn(2+) and Cu(2+). Its function is as follows. Glycosyltransferase that can glycosylate a wide range of substrates, including various flavonoids, phenyl ketones, curcuminoid, lignins, zingerone, triterpenes, stilbene and anthraquinone, using UDP-glucose or ADP-glucose as sugar donor. It also exhibits O-, N- and S-glycosylation activities towards simple aromatics. In vivo, the broad acceptor tolerance of YjiC might function as a detoxification agent against exogenous xenobiotics to make the strain adaptable to the changeable environment. This is NDP-glycosyltransferase YjiC (yjiC) from Bacillus subtilis (strain 168).